The sequence spans 306 residues: MKVYKRLYELLGRGYKPLKSARLIKRGKDYYIGITLQKAVKEKKIKKPRYVINVDLNVQRNLACIGIFEVDWEKRESKLYGIKFVNGKLLRLVYKRDYLFEEIRKKQRQTGRSPQVGDNSRLWKKVNNLNRDIALKVAKEISDIAREFSEKGEVIVVFEKLKGLRGRKGRSKKLNRKINFWMRRKIQERVKELGLEEGFGLDFVYPHYTSKKCSKCGYEGERFSPSGSKALFLCKKCGYVVNADVNAVFNQHFLYLSHLLNGGGKARPVVRVGTSLKSPSREGHNLSGVPKATTTFFYISSLLSTF.

The Zn(2+) site is built by C213, C216, C234, and C237.

The protein belongs to the transposase 35 family.

In Aquifex aeolicus (strain VF5), this protein is TnpB-like protein aq_aa05.